The following is a 74-amino-acid chain: Guanine nucleotide-binding protein G(T) subunit gamma-T1 (74 aa).

Residue Cys-71 is modified to Cysteine methyl ester. Cys-71 carries the S-farnesyl cysteine lipid modification. Positions 72 to 74 (VIS) are cleaved as a propeptide — removed in mature form.

The protein belongs to the G protein gamma family. G proteins are composed of 3 units, alpha, beta and gamma. As to expression, retinal rod outer segment.

The protein resides in the cell membrane. Its function is as follows. Guanine nucleotide-binding proteins (G proteins) are involved as a modulator or transducer in various transmembrane signaling systems. The beta and gamma chains are required for the GTPase activity, for replacement of GDP by GTP, and for G protein-effector interaction. The chain is Guanine nucleotide-binding protein G(T) subunit gamma-T1 (Gngt1) from Mus musculus (Mouse).